Consider the following 137-residue polypeptide: Large ribosomal subunit protein uL16 (137 aa).

This sequence belongs to the universal ribosomal protein uL16 family. As to quaternary structure, part of the 50S ribosomal subunit.

Functionally, binds 23S rRNA and is also seen to make contacts with the A and possibly P site tRNAs. The protein is Large ribosomal subunit protein uL16 of Xanthobacter autotrophicus (strain ATCC BAA-1158 / Py2).